Here is a 226-residue protein sequence, read N- to C-terminus: 7-cyano-7-deazaguanine synthase (226 aa).

10–20 (FSGGQDSTTLA) provides a ligand contact to ATP. Cysteine 190, cysteine 205, cysteine 208, and cysteine 211 together coordinate Zn(2+).

The protein belongs to the QueC family. It depends on Zn(2+) as a cofactor.

The enzyme catalyses 7-carboxy-7-deazaguanine + NH4(+) + ATP = 7-cyano-7-deazaguanine + ADP + phosphate + H2O + H(+). Its pathway is purine metabolism; 7-cyano-7-deazaguanine biosynthesis. Its function is as follows. Catalyzes the ATP-dependent conversion of 7-carboxy-7-deazaguanine (CDG) to 7-cyano-7-deazaguanine (preQ(0)). In Helicobacter pylori (strain ATCC 700392 / 26695) (Campylobacter pylori), this protein is 7-cyano-7-deazaguanine synthase.